Here is an 800-residue protein sequence, read N- to C-terminus: Protein SPT2 homolog (800 aa).

The interval 1 to 687 (MDFHSVLRMA…PGHRPNMQPP (687 aa)) is important for interaction with DNA. Residues 53–82 (QEIQNKEVEAKRKKEGLLAKRKELKHDRKA) are a coiled coil. 3 disordered regions span residues 70 to 173 (LAKR…PALN), 197 to 646 (KEER…MAKP), and 661 to 698 (VPKSINGHMNGMRSAVPPGHRPNMQPPGRPLPPITSSY). Positions 124–137 (TEEDEEYMTEEELY) are enriched in acidic residues. The segment covering 155–164 (PQKVAKAAPG) has biased composition (low complexity). Residues 196–224 (KKEERLRTAEELKELEFLERKAQKADRKD) are a coiled coil. Basic and acidic residues-rich tracts occupy residues 197-226 (KEERLRTAEELKELEFLERKAQKADRKDPM) and 249-259 (HSVEKRSHENS). Polar residues predominate over residues 260-272 (KSSSTEQNGTFRK). Positions 273 to 295 (SSSDNRSREEKSGSVFHTKDSKF) are enriched in basic and acidic residues. Composition is skewed to low complexity over residues 328–360 (SGSTSLRPSSGGSSSVSGRPSGSSEKPGSSSGK), 367–377 (SSSARSSSGSG), 390–424 (GASGSGSARSVGESGSRSGKPTGASGSGLARSVGA), 443–501 (GVSG…SVSG), and 514–581 (GAPG…ASSS). Over residues 608-626 (NSVRHNTTSISVSARSSLG) the composition is skewed to polar residues. The segment covering 684-693 (MQPPGRPLPP) has biased composition (pro residues). The tract at residues 688-800 (GRPLPPITSS…LKSAKKMKSR (113 aa)) is important for interaction with histones. Residues 756 to 800 (REQQKEEARSLRLGIQEDLEELRREEEELKQKAKQLKSAKKMKSR) are a coiled coil.

The protein belongs to the SPT2 family. Interacts with histones. Interacts with a heterotetrameric complex formed by histone H3 and H4, especially when the histone tetramer is not bound to DNA.

The protein localises to the nucleus. The protein resides in the nucleolus. Functionally, histone chaperone that stabilizes pre-existing histone tetramers and regulates replication-independent histone exchange on chromatin. Required for normal chromatin refolding in the coding region of transcribed genes, and for the suppression of spurious transcription. Binds DNA and histones and promotes nucleosome assembly (in vitro). Facilitates formation of tetrameric histone complexes containing histone H3 and H4. Modulates RNA polymerase 1-mediated transcription. Binds DNA, with a preference for branched DNA species, such as Y-form DNA and Holliday junction DNA. The protein is Protein SPT2 homolog (spty2d1) of Xenopus laevis (African clawed frog).